The primary structure comprises 247 residues: DNA polymerase sliding clamp (247 aa).

This sequence belongs to the PCNA family. As to quaternary structure, homotrimer. The subunits circularize to form a toroid; DNA passes through its center. Replication factor C (RFC) is required to load the toroid on the DNA.

Its function is as follows. Sliding clamp subunit that acts as a moving platform for DNA processing. Responsible for tethering the catalytic subunit of DNA polymerase and other proteins to DNA during high-speed replication. The polypeptide is DNA polymerase sliding clamp (Haloarcula marismortui (strain ATCC 43049 / DSM 3752 / JCM 8966 / VKM B-1809) (Halobacterium marismortui)).